A 383-amino-acid polypeptide reads, in one-letter code: Protein COS7 (383 aa).

Topologically, residues Met-1 to Glu-42 are cytoplasmic. A helical transmembrane segment spans residues Ile-43 to Trp-63. At Lys-64–Pro-72 the chain is on the extracellular side. Residues Leu-73–Leu-93 traverse the membrane as a helical segment. The Cytoplasmic segment spans residues Ser-94–Arg-232. Residues Ile-233 to Gln-253 traverse the membrane as a helical segment. Position 254 (His-254) is a topological domain, extracellular. The chain crosses the membrane as a helical span at residues Phe-255–Phe-275. At Gln-276 to Lys-383 the chain is on the cytoplasmic side.

Belongs to the DUP/COS family.

It localises to the membrane. The protein is Protein COS7 (COS7) of Saccharomyces cerevisiae (strain ATCC 204508 / S288c) (Baker's yeast).